The chain runs to 750 residues: Neprilysin (750 aa).

The span at 1–14 (MGKSESQMDITDIN) shows a compositional bias: polar residues. The tract at residues 1 to 20 (MGKSESQMDITDINTPKPKK) is disordered. Residue Gly2 is the site of N-myristoyl glycine attachment. Residues 2–28 (GKSESQMDITDINTPKPKKKQRWTPLE) lie on the Cytoplasmic side of the membrane. Ser4 and Ser6 each carry phosphoserine. The Stop-transfer sequence motif lies at 16-23 (PKPKKKQR). A helical; Signal-anchor for type II membrane protein membrane pass occupies residues 29 to 51 (ISLSVLVLLLTIIAVTMIALYAT). Residues 52–750 (YDDGICKSSD…MNPEKKCRVW (699 aa)) lie on the Extracellular side of the membrane. The Peptidase M13 domain maps to 56–750 (ICKSSDCIKS…MNPEKKCRVW (695 aa)). Intrachain disulfides connect Cys57–Cys62, Cys80–Cys735, Cys88–Cys695, Cys143–Cys411, Cys234–Cys242, and Cys621–Cys747. An a peptide-binding site is contributed by Arg103. Residue Asn145 is glycosylated (N-linked (GlcNAc...) asparagine). N-linked (GlcNAc...) asparagine glycans are attached at residues Asn285, Asn311, Asn325, and Asn335. His584 serves as a coordination point for Zn(2+). Glu585 is an active-site residue. His588 serves as a coordination point for Zn(2+). An N-linked (GlcNAc...) asparagine glycan is attached at Asn628. Residue Glu647 coordinates Zn(2+). Catalysis depends on Asp651, which acts as the Proton donor.

The protein belongs to the peptidase M13 family. Zn(2+) serves as cofactor. Myristoylation is a determinant of membrane targeting. In terms of processing, glycosylation at Asn-628 is necessary both for surface expression and neutral endopeptidase activity.

Its subcellular location is the cell membrane. It carries out the reaction Preferential cleavage of polypeptides between hydrophobic residues, particularly with Phe or Tyr at P1'.. The catalysed reaction is substance P + H2O = substance P(1-9) + L-Leu-L-Met-NH2. The enzyme catalyses substance P + H2O = substance P(1-7) + L-Phe-Gly-L-Leu-L-Met-NH2. It catalyses the reaction neurotensin + H2O = neurotensin(1-11) + L-isoleucyl-L-leucine. It carries out the reaction neurotensin + H2O = neurotensin(1-10) + L-tyrosyl-L-isoleucyl-L-leucine. In terms of biological role, thermolysin-like specificity, but is almost confined on acting on polypeptides of up to 30 amino acids. Biologically important in the destruction of opioid peptides such as Met- and Leu-enkephalins by cleavage of a Gly-Phe bond. Catalyzes cleavage of bradykinin, substance P and neurotensin peptides. Able to cleave angiotensin-1, angiotensin-2 and angiotensin 1-9. Involved in the degradation of atrial natriuretic factor (ANF) and brain natriuretic factor (BNP(1-32)). Displays UV-inducible elastase activity toward skin preelastic and elastic fibers. The chain is Neprilysin (MME) from Pongo abelii (Sumatran orangutan).